A 628-amino-acid chain; its full sequence is Propionate--CoA ligase (628 aa).

The protein belongs to the ATP-dependent AMP-binding enzyme family.

The catalysed reaction is propanoate + ATP + CoA = propanoyl-CoA + AMP + diphosphate. It functions in the pathway organic acid metabolism; propanoate degradation. Catalyzes the synthesis of propionyl-CoA from propionate and CoA. Also converts acetate to acetyl-CoA but with a lower specific activity. In Salmonella typhimurium (strain LT2 / SGSC1412 / ATCC 700720), this protein is Propionate--CoA ligase (prpE).